Here is a 970-residue protein sequence, read N- to C-terminus: Polycystin-2 (970 aa).

A compositionally biased stretch (polar residues) spans 1-11 (MVNSSRVQPQQ). The segment at 1 to 182 (MVNSSRVQPQ…GDPLHRHLPL (182 aa)) is disordered. The Cytoplasmic segment spans residues 1–221 (MVNSSRVQPQ…STDREKYLKS (221 aa)). The span at 25-45 (GPGRLMAGGAIAGAGLAAPGG) shows a compositional bias: low complexity. Over residues 47-60 (REQRGLEIEMERIR) the composition is skewed to basic and acidic residues. The span at 62–83 (AAARDPPAGASASPSPPLSSCS) shows a compositional bias: low complexity. A phosphoserine mark is found at serine 76 and serine 80. Positions 95-109 (EAEEEEEEEEVEGEE) are enriched in acidic residues. Over residues 125-138 (RRSASSSAVSSAGA) the composition is skewed to low complexity. The residue at position 139 (arginine 139) is an Omega-N-methylarginine. The span at 139–148 (RGRGLGGYHG) shows a compositional bias: gly residues. The helical transmembrane segment at 222–243 (VLRELATYLLFLIVLCILTYGM) threads the bilayer. Residues 244 to 470 (MSSSVYYYTR…PVKLIRYVTT (227 aa)) are Extracellular-facing. Asparagine 301, asparagine 307, and asparagine 330 each carry an N-linked (GlcNAc...) asparagine glycan. A disulfide bridge links cysteine 333 with cysteine 346. Residues asparagine 364 and asparagine 377 are each glycosylated (N-linked (GlcNAc...) asparagine). Residues 471–491 (FDFFLAACEIIFCLFILYYVV) form a helical membrane-spanning segment. Over 492–507 (EEILEIRIHKLHYFRS) the chain is Cytoplasmic. A helical transmembrane segment spans residues 508 to 528 (FWNCLDVVIIVLSVVAIGINI). The Extracellular segment spans residues 529-554 (YRTSNVEALLQFLEDQNTFPNFENLA). Residues 555 to 575 (YWQTQFNNIAAVIVFFVWIKL) form a helical membrane-spanning segment. Glutamine 559 is a binding site for cholesterol. The Cytoplasmic portion of the chain corresponds to 576–599 (FKFINFNRTMSQLSTTMSRCAKDL). The helical transmembrane segment at 600-621 (FGFAIMFFIIFLAYAQLAYLVF) threads the bilayer. At 622 to 633 (GTQVDDFSTFQE) the chain is on the extracellular side. The pore-forming intramembrane region spans 634–648 (CIFTQFRIILGDINF). Position 643 (leucine 643) interacts with Ca(2+). The Selectivity filter signature appears at 643–645 (LGD). At 649–656 (AEIEEANR) the chain is on the extracellular side. The chain crosses the membrane as a helical span at residues 657–677 (VLGPIYFTTFVFFMFFILLNM). Topologically, residues 678–970 (FLAIINDTYS…GGNGSANIHV (293 aa)) are cytoplasmic. The region spanning 750-785 (KGHTDAEIEAIFTKYDQDGDQELTEHEHQQMRDDLE) is the EF-hand domain. Ca(2+)-binding residues include aspartate 765, aspartate 767, aspartate 769, glutamate 771, and glutamate 776. Positions 766–833 (QDGDQELTEH…HSSRRRGSIS (68 aa)) are disordered. A compositionally biased stretch (basic and acidic residues) spans 772-797 (LTEHEHQQMRDDLEKEREDLDLDHSS). Residues 798–809 (LPRPMSSRSFPR) show a composition bias toward low complexity. Serine 803, serine 810, serine 814, and serine 831 each carry phosphoserine. The segment at 805-824 (RSFPRSLDDSEEEDDDDSGH) is linker. The segment at 812–823 (DDSEEEDDDDSG) is important for interaction with PACS1 and PACS2. The stretch at 835-874 (GVSYEEFQVLVRRVDRMEHSIGSIVSKIDAVIVKLEIMER) forms a coiled coil. Residues 921–970 (DDAASQISHGLGTPLGLNGQPRPRSSRPSSSQSTEGMEGGGGNGSANIHV) are disordered. The span at 940 to 956 (QPRPRSSRPSSSQSTEG) shows a compositional bias: low complexity.

The protein belongs to the polycystin family. Homotetramer. Component of the heterotetrameric polycystin channel complex with PKD1; the tetramer contains one PKD1 chain and three PKD2 chains. Isoform 1 interacts with PKD1 while isoform 3 does not. Interacts with PKD1L1; probably forms a Ca(2+) channel. Interacts with CD2AP. Interacts with HAX1. Interacts with NEK8. Part of a complex containing AKAP5, ADCY5, ADCY6 and PDE4C. Interacts (via C-terminus) with TRPV4 (via C-terminus). Interacts (via C-terminal acidic region) with PACS1 and PACS2; these interactions retain the protein in the endoplasmic reticulum and prevent trafficking to the cell membrane. Interacts with TMEM33. Form a heterotetramer with TRPC1 with a 2:2 stoichiometry; has distinct channel properties separate from PKD2 or TRPC1 homomers alone. Interacts with TMEM120A; TMEM120A inhibits PKD2 channel activity through the physical association of PKD2 with TMEM120A. Interacts (via N-terminus) with RYR2; regulates RYR2 channel activity. Post-translationally, N-glycosylated. The four subunits in a tetramer probably differ in the extent of glycosylation; simultaneous glycosylation of all experimentally validated sites would probably create steric hindrance. Phosphorylated. Phosphorylation is important for protein function; a mutant that lacks the N-terminal phosphorylation sites cannot complement a zebrafish pkd2-deficient mutant. PKD-mediated phosphorylation at the C-terminus regulates its function in the release of Ca(2+) stores from the endoplasmic reticulum. Phosphorylation at Ser-814 regulates PKD2 trafficking. Phosphorylation at Ser-76 is required for PKD2 trafficking to or retention at the lateral plasma membrane. Phosphorylation at Ser-803, Ser-814 and Ser-831 regulates PKD2 channel activity. In terms of processing, sumoylated by SUMO1; sumoylation regulates PKD2 membrane recycling and is necessary for intravascular pressure-induced arterial contractility. Expressed in mesenchymally derived structures in the developing embryo at day 12.5. In adult, mostly expressed in kidney.

The protein resides in the cell projection. It is found in the cilium membrane. It localises to the endoplasmic reticulum membrane. Its subcellular location is the cell membrane. The protein localises to the basolateral cell membrane. The protein resides in the cytoplasmic vesicle membrane. It is found in the golgi apparatus. It localises to the vesicle. Its subcellular location is the secreted. The protein localises to the extracellular exosome. It carries out the reaction K(+)(in) = K(+)(out). The catalysed reaction is Na(+)(in) = Na(+)(out). The enzyme catalyses Ca(2+)(in) = Ca(2+)(out). Its activity is regulated as follows. Channel activity is regulated by phosphorylation. Channel activity is regulated by intracellular Ca(2+). At the endoplasmic reticulum membrane (ER), TMEM33 enhances its channel activity. TMEM120A inhibits the channel activity of PKD2, and mediates mechanosensitivity of the PKD2-TMEM120A channel complex. PKD1/PKD2 complex on the plasma membrane is activated by PKD1 N-terminus. In terms of biological role, forms a nonselective cation channel. Can function as a homotetrameric ion channel or can form heteromer with PKD1. Displays distinct function depending on its subcellular localization and regulation by its binding partners. Functions as a cation channel, with a preference for monovalent cations over divalent cations that allows K(+), Na(+) and Ca(2+) influx, with low selectivity for Ca(2+). Involved in fluid-flow mechanosensation in the primary cilium in renal epithelium. In the endoplasmic reticulum, likely functions as a K(+) channel to facilitate Ca(2+) release. The heterotetrameric PKD1/PKD2 channel has higher Ca(2+) permeability than homomeric PKD2 channel and acts as a primarily Ca(2+)-permeable channel. Interacts with and acts as a regulator of a number of other channels, such as TRPV4, TRPC1, IP3R, RYR2, ultimately further affecting intracellular signaling, to modulate intracellular Ca(2+) signaling. Together with TRPV4, forms mechano- and thermosensitive channels in cilium. In cardiomyocytes, PKD2 modulates Ca(2+) release from stimulated RYR2 receptors through direct association. Also involved in left-right axis specification via its role in sensing nodal flow; forms a complex with PKD1L1 in cilia to facilitate flow detection in left-right patterning. Acts as a regulator of cilium length together with PKD1. Mediates systemic blood pressure and contributes to the myogenic response in cerebral arteries though vasoconstriction. This Bos taurus (Bovine) protein is Polycystin-2.